Here is a 354-residue protein sequence, read N- to C-terminus: Eukaryotic translation initiation factor 3 subunit H (354 aa).

The tract at residues 1–28 is disordered; sequence MATRQPYQKKFQSRDQREQTSSQQAPNS. The span at 19 to 28 shows a compositional bias: polar residues; the sequence is QTSSQQAPNS. An MPN domain is found at 33–174; that stretch reads VTVDALVVMK…LSAFRLSNKA (142 aa).

This sequence belongs to the eIF-3 subunit H family. As to quaternary structure, component of the eukaryotic translation initiation factor 3 (eIF-3) complex.

The protein resides in the cytoplasm. Functionally, component of the eukaryotic translation initiation factor 3 (eIF-3) complex, which is involved in protein synthesis of a specialized repertoire of mRNAs and, together with other initiation factors, stimulates binding of mRNA and methionyl-tRNAi to the 40S ribosome. The eIF-3 complex specifically targets and initiates translation of a subset of mRNAs involved in cell proliferation. This chain is Eukaryotic translation initiation factor 3 subunit H, found in Monosiga brevicollis (Choanoflagellate).